The chain runs to 403 residues: Phosphoglycerate kinase (403 aa).

Substrate is bound by residues 22–24, R37, 60–63, R119, and R152; these read DLN and HLGN. Residues K202, E325, and 355 to 358 each bind ATP; that span reads GGDT.

This sequence belongs to the phosphoglycerate kinase family. As to quaternary structure, monomer.

Its subcellular location is the cytoplasm. It carries out the reaction (2R)-3-phosphoglycerate + ATP = (2R)-3-phospho-glyceroyl phosphate + ADP. It participates in carbohydrate degradation; glycolysis; pyruvate from D-glyceraldehyde 3-phosphate: step 2/5. The protein is Phosphoglycerate kinase of Orientia tsutsugamushi (strain Boryong) (Rickettsia tsutsugamushi).